Reading from the N-terminus, the 599-residue chain is Sulfite reductase [NADPH] flavoprotein alpha-component (599 aa).

In terms of domain architecture, Flavodoxin-like spans 64–202 (VTLISASQTG…AASEWRARVV (139 aa)). FMN contacts are provided by residues 70 to 75 (SQTGNA), 117 to 120 (STQG), and 153 to 162 (LGDTSYEFFC). An FAD-binding FR-type domain is found at 234–448 (DAPLAATLSV…IEHNDNFRLP (215 aa)). FAD-binding positions include T322, A356, 386 to 389 (RLYS), 404 to 406 (TVG), Y410, and 419 to 422 (GGAS). Residues 519-520 (SR), 525-529 (KIYVQ), and D561 each bind NADP(+). Y599 is an FAD binding site.

The protein belongs to the NADPH-dependent sulphite reductase flavoprotein subunit CysJ family. In the N-terminal section; belongs to the flavodoxin family. It in the C-terminal section; belongs to the flavoprotein pyridine nucleotide cytochrome reductase family. In terms of assembly, alpha(8)-beta(8). The alpha component is a flavoprotein, the beta component is a hemoprotein. FAD is required as a cofactor. It depends on FMN as a cofactor.

It catalyses the reaction hydrogen sulfide + 3 NADP(+) + 3 H2O = sulfite + 3 NADPH + 4 H(+). The protein operates within sulfur metabolism; hydrogen sulfide biosynthesis; hydrogen sulfide from sulfite (NADPH route): step 1/1. In terms of biological role, component of the sulfite reductase complex that catalyzes the 6-electron reduction of sulfite to sulfide. This is one of several activities required for the biosynthesis of L-cysteine from sulfate. The flavoprotein component catalyzes the electron flow from NADPH -&gt; FAD -&gt; FMN to the hemoprotein component. The chain is Sulfite reductase [NADPH] flavoprotein alpha-component from Salmonella paratyphi B (strain ATCC BAA-1250 / SPB7).